Reading from the N-terminus, the 627-residue chain is UvrABC system protein C (627 aa).

One can recognise a GIY-YIG domain in the interval 26–105; it reads PEPGVYFMRD…IKQHQPYFNV (80 aa). One can recognise a UVR domain in the interval 215–250; the sequence is QELIDILSEQMEKAAEALNFEVAARIRDQIAGLKSL.

It belongs to the UvrC family. Interacts with UvrB in an incision complex.

It is found in the cytoplasm. The UvrABC repair system catalyzes the recognition and processing of DNA lesions. UvrC both incises the 5' and 3' sides of the lesion. The N-terminal half is responsible for the 3' incision and the C-terminal half is responsible for the 5' incision. The protein is UvrABC system protein C of Nostoc sp. (strain PCC 7120 / SAG 25.82 / UTEX 2576).